A 151-amino-acid polypeptide reads, in one-letter code: Small ribosomal subunit protein uS11 (151 aa).

Positions 131–151 are disordered; sequence DVTPVPSDSTRRKGGRRGRRL. The segment covering 142 to 151 has biased composition (basic residues); the sequence is RKGGRRGRRL.

It belongs to the universal ribosomal protein uS11 family.

The sequence is that of Small ribosomal subunit protein uS11 from Bombyx mori (Silk moth).